Consider the following 628-residue polypeptide: Somatic embryogenesis receptor kinase 2 (628 aa).

Positions 1–29 (MGRKKFEAFGFVCLISLLLLFNSLWLASS) are cleaved as a signal peptide. At 30-241 (NMEGDALHSL…PTPGGYSATG (212 aa)) the chain is on the extracellular side. Positions 45–85 (DPNNVLQSWDPTLVNPCTWFHVTCNNENSVIRVDLGNADLS) are PSKR1 binding. The tract at residues 56–58 (TLV) is CLE44 binding. A disulfide bridge links C61 with C68. 2 leucine-rich repeat receptor-like protein kinase binding regions span residues 62–81 (TWFHVTCNNENSVIRVDLGN) and 100–105 (YLELYS). Brassinolide is bound at residue 64 to 65 (FH). LRR repeat units lie at residues 95-119 (LKNLQYLELYSNNITGPVPSDLGNL), 121-143 (NLVSLDLYLNSFTGPIPDSLGKL), 144-167 (FKLRFLRLNNNSLTGPIPMSLTNI), and 168-192 (MTLQVLDLSNNRLSGSVPDNGSFSL). N-linked (GlcNAc...) asparagine glycans are attached at residues N107 and N118. Leucine-rich repeat receptor-like protein kinase binding stretches follow at residues 126–129 (DLYL) and 148–150 (FLR). Residues N153 and N187 are each glycosylated (N-linked (GlcNAc...) asparagine). Positions 174-197 (DLSNNRLSGSVPDNGSFSLFTPIS) are leucine-rich repeat receptor-like protein kinase binding. An intrachain disulfide couples C205 to C213. A helical membrane pass occupies residues 242–262 (AIAGGVAAGAALLFAAPALAF). Over 263–628 (AWWRRRKPQE…LHAMELSGPR (366 aa)) the chain is Cytoplasmic. T302 carries the post-translational modification Phosphothreonine. The Protein kinase domain occupies 305–592 (FSNKNILGRG…GLAEKWDEWQ (288 aa)). 311-319 (LGRGGFGKV) contacts ATP. T328 is modified (phosphothreonine). K333 provides a ligand contact to ATP. S386 and S389 each carry phosphoserine. D432 (proton acceptor) is an active-site residue. Residues T462, T465, T466, and T471 each carry the phosphothreonine modification. Y479 carries the post-translational modification Phosphotyrosine. S481 is subject to Phosphoserine. T482 carries the post-translational modification Phosphothreonine. S486 bears the Phosphoserine mark. T562 carries the phosphothreonine modification. S604 carries the post-translational modification Phosphoserine. At T616 the chain carries Phosphothreonine. S625 bears the Phosphoserine mark.

This sequence belongs to the protein kinase superfamily. Ser/Thr protein kinase family. As to quaternary structure, homo- and heterodimer. Component of the SERK1 signaling complex, composed of KAPP, CDC48A, GRF6 or GRF7, SERK1, SERK2, SERK3/BAK1 and BRI1. Bind to BRI1 in a brassinolide-dependent manner. Heterodimer with PSKR1. Interacts with the EF-Tu receptor EFR and FLS2 in a specific ligand-induced manner. Interacts with ERECTA in a EPF2-induced manner. Interacts with ERL1 in a EPF1-induced manner. Interacts with TMM. In the presence of the signal peptide RGF1, interacts with RGI3/RGFR1 and RGI4/RGFR2/SKM2. Binds to the peptide CLE44 in the presence of TDR. In terms of processing, autophosphorylated. Expressed in flowers, tapetum, developing microspores, all cells of the embryo sac, provascular strands and developing vascular bundles. Low expression in adult vascular tissue.

It is found in the cell membrane. The catalysed reaction is L-seryl-[protein] + ATP = O-phospho-L-seryl-[protein] + ADP + H(+). The enzyme catalyses L-threonyl-[protein] + ATP = O-phospho-L-threonyl-[protein] + ADP + H(+). Serine/threonine-kinase involved in brassinosteroid-dependent and -independent signaling pathways. Acts redundantly with SERK1 as a control point for sporophytic development controlling male gametophyte production. Serves as coreceptor to small peptide (e.g. RGF1 and CLE44) signaling. Involved in the perception of phytosulfokine and subsequent signal transduction. The protein is Somatic embryogenesis receptor kinase 2 of Arabidopsis thaliana (Mouse-ear cress).